The following is a 360-amino-acid chain: Magnesium transporter NIPA2 (360 aa).

Residues 1–9 (MSQGRGKYD) are Extracellular-facing. The chain crosses the membrane as a helical span at residues 10–30 (FYIGLGLAMSSSIFIGGSFIL). The Cytoplasmic segment spans residues 31–56 (KKKGLLRLARKGSMRAGQGGHAYLKE). A helical membrane pass occupies residues 57–77 (WLWWAGLLSMGAGEVANFAAY). Ala-78 is a topological domain (extracellular). The chain crosses the membrane as a helical span at residues 79–99 (FAPATLVTPLGALSVLVSAIL). The Cytoplasmic portion of the chain corresponds to 100-107 (SSYFLNER). The helical transmembrane segment at 108 to 128 (LNLHGKIGCLLSILGSTVMVI) threads the bilayer. At 129–149 (HAPKEEEIETLNEMSHKLGDP) the chain is on the extracellular side. The helical transmembrane segment at 150 to 170 (GFVVFATLVVIVALILIFVVG) threads the bilayer. Topologically, residues 171–175 (PRHGQ) are cytoplasmic. The helical transmembrane segment at 176–196 (TNILVYITICSVIGAFSVSCV) threads the bilayer. Residues 197-215 (KGLGIAIKELFAGKPVLRH) are Extracellular-facing. A helical membrane pass occupies residues 216–236 (PLAWILLLSLIVCVSTQINYL). At 237 to 246 (NRALDIFNTS) the chain is on the cytoplasmic side. The helical transmembrane segment at 247–267 (IVTPIYYVFFTTSVLTCSAIL) threads the bilayer. Residues 268–278 (FKEWQDMPVDD) are Extracellular-facing. A helical transmembrane segment spans residues 279-299 (VIGTLSGFFTIIVGIFLLHAF). Residues 300–360 (KDVSFSLASL…SRRNGNLTAF (61 aa)) are Cytoplasmic-facing.

Belongs to the NIPA family. As to expression, widely expressed.

Its subcellular location is the cell membrane. The protein localises to the early endosome. The catalysed reaction is Mg(2+)(in) = Mg(2+)(out). Its function is as follows. Acts as a selective Mg(2+) transporter. In Homo sapiens (Human), this protein is Magnesium transporter NIPA2 (NIPA2).